The chain runs to 408 residues: MDKLLERFLNYVSLDTQSKAGVRQVPSTEGQWKLLHLLKEQLEEMGLINVTLSEKGTLMATLPANVPGDIPAIGFISHVDTSPDCSGKNVNPQIVENYRGGDIALGIGDEVLSPVMFPVLHQLLGQTLITTDGKTLLGADDKAGIAEIMTALAVLQQKNIPHGDIRVAFTPDEEVGKGAKHFDVDAFDARWAYTVDGGGVGELEFENFNAASVNIKIVGNNVHPGTAKGVMVNALSLAARIHAEVPADESPEMTEGYEGFYHLASMKGTVDRADMHYIIRDFDRKQFEARKRKMMEIAKKVGKGLHPDCYIELVIEDSYYNMREKVVEHPHILDIAQQAMRDCDIEPELKPIRGGTDGAQLSFMGLPCPNLFTGGYNYHGKHEFVTLEGMEKAVQVIVRIAELTAQRK.

H78 contributes to the Zn(2+) binding site. D80 is a catalytic residue. D140 serves as a coordination point for Zn(2+). The active-site Proton acceptor is E173. Residues E174, D196, and H379 each contribute to the Zn(2+) site.

Belongs to the peptidase M20B family. Requires Zn(2+) as cofactor.

The protein localises to the cytoplasm. The enzyme catalyses Release of the N-terminal residue from a tripeptide.. In terms of biological role, cleaves the N-terminal amino acid of tripeptides. The protein is Peptidase T of Escherichia coli O9:H4 (strain HS).